A 417-amino-acid chain; its full sequence is Tryptophan synthase beta chain (417 aa).

The residue at position 111 (Lys-111) is an N6-(pyridoxal phosphate)lysine.

This sequence belongs to the TrpB family. In terms of assembly, tetramer of two alpha and two beta chains. Pyridoxal 5'-phosphate serves as cofactor.

The enzyme catalyses (1S,2R)-1-C-(indol-3-yl)glycerol 3-phosphate + L-serine = D-glyceraldehyde 3-phosphate + L-tryptophan + H2O. Its pathway is amino-acid biosynthesis; L-tryptophan biosynthesis; L-tryptophan from chorismate: step 5/5. Its function is as follows. The beta subunit is responsible for the synthesis of L-tryptophan from indole and L-serine. This is Tryptophan synthase beta chain from Fervidobacterium nodosum (strain ATCC 35602 / DSM 5306 / Rt17-B1).